We begin with the raw amino-acid sequence, 100 residues long: Small ribosomal subunit protein uS14 (100 aa).

This sequence belongs to the universal ribosomal protein uS14 family. Part of the 30S ribosomal subunit. Contacts proteins S3 and S10.

Its function is as follows. Binds 16S rRNA, required for the assembly of 30S particles and may also be responsible for determining the conformation of the 16S rRNA at the A site. The polypeptide is Small ribosomal subunit protein uS14 (Prochlorococcus marinus (strain MIT 9211)).